A 216-amino-acid polypeptide reads, in one-letter code: Urease operon 23 kDa accessory protein (216 aa).

Its function is as follows. Involved in the expression of hydrogenase activity. May be a regulatory gene affecting the expression of the hydrogenase operon or could be involved in the process of nickel incorporation into the hydrogenase apoenzyme. The sequence is that of Urease operon 23 kDa accessory protein from Rhizobium meliloti (strain 1021) (Ensifer meliloti).